A 475-amino-acid chain; its full sequence is Tryptophan--tRNA ligase, cytoplasmic (475 aa).

The WHEP-TRS domain maps to 12 to 68 (SPQELFSSIAAQGELVKSLKARKAPKEEIDSAVKMLLSLKTSYKEAMGEDYKADCPP). The disordered stretch occupies residues 61-87 (DYKADCPPGNSTPDSHGDPEAVDDKED). The residue at position 158 (Lys-158) is an N6-succinyllysine. Residues 168–177 (PSSEAMHVGH) carry the 'HIGH' region motif. The short motif at 353–357 (KMSAS) is the 'KMSKS' region element. Ser-355 is subject to Phosphoserine.

It belongs to the class-I aminoacyl-tRNA synthetase family. As to quaternary structure, homodimer. Interacts with oxidized form of GAPDH. In terms of processing, proteolytic cleavage generates 2 forms; T1-TrpRS and T2-TrpRS.

The protein resides in the cytoplasm. The catalysed reaction is tRNA(Trp) + L-tryptophan + ATP = L-tryptophyl-tRNA(Trp) + AMP + diphosphate + H(+). Functionally, catalyzes the attachment of tryptophan to tRNA(Trp) in a two-step reaction: tryptophan is first activated by ATP to form Trp-AMP and then transferred to the acceptor end of the tRNA(Trp). Could also possess an angiostatic activity. The polypeptide is Tryptophan--tRNA ligase, cytoplasmic (WARS1) (Oryctolagus cuniculus (Rabbit)).